A 425-amino-acid chain; its full sequence is Serine--tRNA ligase (425 aa).

230–232 (TAE) is an L-serine binding site. 261–263 (RSE) contributes to the ATP binding site. Glu-284 is a binding site for L-serine. 348-351 (EISS) is a binding site for ATP. Residue Ser-384 coordinates L-serine.

It belongs to the class-II aminoacyl-tRNA synthetase family. Type-1 seryl-tRNA synthetase subfamily. As to quaternary structure, homodimer. The tRNA molecule binds across the dimer.

The protein resides in the cytoplasm. The enzyme catalyses tRNA(Ser) + L-serine + ATP = L-seryl-tRNA(Ser) + AMP + diphosphate + H(+). It carries out the reaction tRNA(Sec) + L-serine + ATP = L-seryl-tRNA(Sec) + AMP + diphosphate + H(+). It functions in the pathway aminoacyl-tRNA biosynthesis; selenocysteinyl-tRNA(Sec) biosynthesis; L-seryl-tRNA(Sec) from L-serine and tRNA(Sec): step 1/1. Functionally, catalyzes the attachment of serine to tRNA(Ser). Is also able to aminoacylate tRNA(Sec) with serine, to form the misacylated tRNA L-seryl-tRNA(Sec), which will be further converted into selenocysteinyl-tRNA(Sec). This chain is Serine--tRNA ligase, found in Streptococcus pyogenes serotype M12 (strain MGAS2096).